Reading from the N-terminus, the 197-residue chain is MQNVSEREREEMGIVVNYLFSHNFLLKEFEREKYHLAVRNKDIIKQYLQVIGWDFIVDEKHGCIVIVSPHYEHRLKLKKDETIWLLVLRLIYEEKRSALSISQYPFTTLQEIKGKYETFRLPFVSKTKLRELVQIGKQNQLLRPIDNDIESDDCRFQLFHSCIHVLQQGDLNVLYEKIKSYSEGGDHSEMDEETTIN.

Component of antiplasmid transformation system Wadjet type I, composed of JetA, JetB, JetC and JetD. Expression of Wadjet type I in B.subtilis (strain BEST7003) reduces the transformation efficiency of plasmid pHCMC05. The polypeptide is Wadjet protein JetB (Bacillus cereus (strain Q1)).